A 416-amino-acid polypeptide reads, in one-letter code: MPYNCCLPALSCRTSCSSRPCVPPSCHGCTLPGACNIPANVGNCNWFCEGSFNGNEKETMQFLNDRLASYMEKVRQLERENAELECRIQERNQQQDPLVCPAYQAYFRTIEELQQKILCSKSENARLVVQIDNAKLAADDFRTKYETELGLRQLVESDINGLRRILDELTLCKSDLEAQVESLKEELLCLKRNHEEEVNTLRCQLGDRLNVEVDAAPTVDLNRVLNETRCQYEAMVETNRREVEEWFTTQTEELNKQVVSSSEQLQSCQAEIIELRRTVNALEIELQAQHCMRNSLENTLTESEARYSSQLSQVQCLITNVESQLGEIRADLERQNQEYQVLLDVKARLECEINTYRGLLESEDCKLPCNPCATSNACGKPIGPCVSNPCVPCPPPAPCTPCVPRPRCGPCNSFVR.

The interval Pro2–Glu56 is head. Positions Glu56–Leu367 constitute an IF rod domain. Residues Lys57–Arg91 are coil 1A. Residues Asn92 to Ala102 form a linker 1 region. The tract at residues Tyr103–Cys203 is coil 1B. A linker 12 region spans residues Gln204–Val219. The coil 2 stretch occupies residues Asp220 to Glu363. The tail stretch occupies residues Asp364–Arg416.

Belongs to the intermediate filament family.

The sequence is that of Keratin, type I cuticular Ha1 (Krt31) from Mus musculus (Mouse).